A 379-amino-acid polypeptide reads, in one-letter code: Histone-lysine N-methyltransferase ATXR5 (379 aa).

Over residues 1–15 (MATWNASSPAASPCS) the composition is skewed to low complexity. The segment at 1–42 (MATWNASSPAASPCSSRRRTKAPARRPSSESPPPRKMKSMAE) is disordered. A chloroplast-targeting transit peptide spans 1–44 (MATWNASSPAASPCSSRRRTKAPARRPSSESPPPRKMKSMAEIM). A PHD-type zinc finger spans residues 64–114 (NVTCEKCGSGEGDDELLLCDKCDRGFHMKCLRPIVVRVPIGTWLCVDCSDQ). The short motif at 122-129 (QKKILHFF) is the PIP motif element. Methionine 221 contributes to the substrate binding site. In terms of domain architecture, SET spans 245–367 (PPLVVVFDPL…KGERLYYDYN (123 aa)). S-adenosyl-L-methionine is bound by residues 255-257 (EGY) and 317-321 (RFING). Arginine 339 is a substrate binding site. Tyrosine 366 is a binding site for S-adenosyl-L-methionine. 369–370 (YE) lines the substrate pocket. Tyrosine 373 provides a ligand contact to S-adenosyl-L-methionine.

Belongs to the class V-like SAM-binding methyltransferase superfamily. Histone-lysine methyltransferase family. TRX/MLL subfamily. In terms of assembly, isoform 1 but not isoform 2 interacts with PCNA1 and PCNA2. Interacts (via PHD domain) with HTR1 (via N-terminus). Isoform 2 interacts with IPS1. As to expression, expressed in leaves, roots, stems, flowers, siliques and developing pollen. Up-regulated in tissues where cell division is active.

It localises to the nucleus. It is found in the plastid. Its subcellular location is the chloroplast. It carries out the reaction L-lysyl(27)-[histone H3] + S-adenosyl-L-methionine = N(6)-methyl-L-lysyl(27)-[histone H3] + S-adenosyl-L-homocysteine + H(+). Histone methyltransferase that specifically monomethylates 'Lys-27' of histone H3 (H3K27me1). Has much higher activity on nucleosomes containing H3.1 than H3.3. Involved in the formation of constitutive heterochromatin and the silencing of heterochromatic elements. Influences which sets of rRNA gene variants are expressed or silenced. This chain is Histone-lysine N-methyltransferase ATXR5 (ATXR5), found in Arabidopsis thaliana (Mouse-ear cress).